The chain runs to 73 residues: UPF0154 protein MG335.1 (73 aa).

The chain crosses the membrane as a helical span at residues 6 to 26; sequence LALGLGIPLSLLVGMILGYFI.

The protein belongs to the UPF0154 family.

The protein resides in the membrane. This Mycoplasma genitalium (strain ATCC 33530 / DSM 19775 / NCTC 10195 / G37) (Mycoplasmoides genitalium) protein is UPF0154 protein MG335.1.